The chain runs to 404 residues: Propionate kinase (404 aa).

The protein belongs to the acetokinase family. PduW subfamily.

It localises to the cytoplasm. It catalyses the reaction propanoate + ATP = propanoyl phosphate + ADP. It participates in polyol metabolism; 1,2-propanediol degradation. In terms of biological role, works with phosphate acetyltransferase (pta) to capture exogenous propionate and regenerate propionyl-CoA during degradation of 1,2-propanediol (1,2-PD). The chain is Propionate kinase from Klebsiella pneumoniae (strain 342).